The following is an 83-amino-acid chain: Short neurotoxin D (83 aa).

An N-terminal signal peptide occupies residues M1–T21. 4 disulfides stabilise this stretch: C24–C45, C38–C62, C64–C75, and C76–C81.

It belongs to the three-finger toxin family. Short-chain subfamily. Type I alpha-neurotoxin sub-subfamily. In terms of tissue distribution, expressed by the venom gland.

The protein localises to the secreted. In terms of biological role, binds to muscle nicotinic acetylcholine receptor (nAChR) and inhibit acetylcholine from binding to the receptor, thereby impairing neuromuscular transmission. In Laticauda colubrina (Yellow-lipped sea krait), this protein is Short neurotoxin D.